Here is a 269-residue protein sequence, read N- to C-terminus: MFDFMTLEKVQERGPLVHNITNIVVANDSANGLLAIGASPIMASAKQEMDELAKMADVLVINIGMLDGELVEAMKIAGRAANFAETQVVLDPVGVGATSYRRKVVQELLAEIQFAAIRGNAGELAAIAGEAWEAKGVDAGVGSADVLAIAEKVAKEWNTVVIISGEVDVISDGTRFAKVANGSALLPRITGSGCLLSAVCGSFIAVQDDVFRASVEACVSYAVASEYAEMELERKLPGSFRPLFLDALASWSVEKTRAKAKILESGEHK.

Residue Met42 coordinates substrate. ATP-binding residues include Arg118 and Ser164. Gly191 is a substrate binding site.

The protein belongs to the Thz kinase family. Mg(2+) is required as a cofactor.

The enzyme catalyses 5-(2-hydroxyethyl)-4-methylthiazole + ATP = 4-methyl-5-(2-phosphooxyethyl)-thiazole + ADP + H(+). The protein operates within cofactor biosynthesis; thiamine diphosphate biosynthesis; 4-methyl-5-(2-phosphoethyl)-thiazole from 5-(2-hydroxyethyl)-4-methylthiazole: step 1/1. In terms of biological role, catalyzes the phosphorylation of the hydroxyl group of 4-methyl-5-beta-hydroxyethylthiazole (THZ). The polypeptide is Hydroxyethylthiazole kinase (Listeria welshimeri serovar 6b (strain ATCC 35897 / DSM 20650 / CCUG 15529 / CIP 8149 / NCTC 11857 / SLCC 5334 / V8)).